The primary structure comprises 305 residues: Aspartate carbamoyltransferase catalytic subunit (305 aa).

Carbamoyl phosphate contacts are provided by R60 and T61. K88 lines the L-aspartate pocket. Carbamoyl phosphate contacts are provided by R110, H138, and Q141. Residues R171 and R222 each contribute to the L-aspartate site. The carbamoyl phosphate site is built by A263 and P264.

The protein belongs to the aspartate/ornithine carbamoyltransferase superfamily. ATCase family. In terms of assembly, heterododecamer (2C3:3R2) of six catalytic PyrB chains organized as two trimers (C3), and six regulatory PyrI chains organized as three dimers (R2).

It catalyses the reaction carbamoyl phosphate + L-aspartate = N-carbamoyl-L-aspartate + phosphate + H(+). Its pathway is pyrimidine metabolism; UMP biosynthesis via de novo pathway; (S)-dihydroorotate from bicarbonate: step 2/3. In terms of biological role, catalyzes the condensation of carbamoyl phosphate and aspartate to form carbamoyl aspartate and inorganic phosphate, the committed step in the de novo pyrimidine nucleotide biosynthesis pathway. This chain is Aspartate carbamoyltransferase catalytic subunit, found in Halalkalibacterium halodurans (strain ATCC BAA-125 / DSM 18197 / FERM 7344 / JCM 9153 / C-125) (Bacillus halodurans).